We begin with the raw amino-acid sequence, 147 residues long: Large ribosomal subunit protein bL9 (147 aa).

The protein belongs to the bacterial ribosomal protein bL9 family.

Functionally, binds to the 23S rRNA. This Bacteroides thetaiotaomicron (strain ATCC 29148 / DSM 2079 / JCM 5827 / CCUG 10774 / NCTC 10582 / VPI-5482 / E50) protein is Large ribosomal subunit protein bL9.